Consider the following 374-residue polypeptide: Ribosomal RNA large subunit methyltransferase G (374 aa).

This sequence belongs to the methyltransferase superfamily. RlmG family.

The protein resides in the cytoplasm. It catalyses the reaction guanosine(1835) in 23S rRNA + S-adenosyl-L-methionine = N(2)-methylguanosine(1835) in 23S rRNA + S-adenosyl-L-homocysteine + H(+). Functionally, specifically methylates the guanine in position 1835 (m2G1835) of 23S rRNA. This chain is Ribosomal RNA large subunit methyltransferase G, found in Pseudomonas fluorescens (strain ATCC BAA-477 / NRRL B-23932 / Pf-5).